Consider the following 197-residue polypeptide: Caspase recruitment domain-containing protein 16 (197 aa).

The 91-residue stretch at Met-1–Ala-91 folds into the CARD domain.

As to quaternary structure, homooligomer. Interacts with CASP1, CASP4, CARD8 and RIPK2. As to expression, widely expressed. Expressed at higher level in placenta, spleen, lymph node and bone marrow. Weakly or not expressed in thymus.

In terms of biological role, caspase inhibitor. Acts as a regulator of procaspase-1/CASP1 activation implicated in the regulation of the proteolytic maturation of pro-interleukin-1 beta (IL1B) and its release during inflammation. Inhibits the release of IL1B in response to LPS in monocytes. Also induces NF-kappa-B activation during the pro-inflammatory cytokine response. Also able to inhibit CASP1-mediated neuronal cell death, TNF-alpha, hypoxia-, UV-, and staurosporine-mediated cell death but not ER stress-mediated cell death. Acts by preventing activation of caspases CASP1 and CASP4, possibly by preventing the interaction between CASP1 and RIPK2. This Homo sapiens (Human) protein is Caspase recruitment domain-containing protein 16 (CARD16).